The primary structure comprises 294 residues: MKIAAFDIGGTALKMGVVLPHGEIILTKSAEIIASDGDQILAEMKLFLAENTDVTGIAVSAPGYVNPKTGLITMGGAIRRFDNFNLKEWLEAETGLPVAIENDANCALLAEKWLGKGQDLDDFLCLTIGTGIGGGIFSNGALVRGGRFRAGEFGYMFSERPGAFRPGKYTLNETTTMLVLRRQYAQLTGRPLKEITGEEIFANYDAHDPISERLINEFYTGICTGLYNLIYLFDPTHIFIGGGITSRPTFITELKHHMASFGLRDTIIETATHKNQAGLLGAVYHFLQEENRHE.

5–11 (AFDIGGT) contacts ATP.

The protein belongs to the ROK (NagC/XylR) family.

It carries out the reaction D-cellobiose + ATP = 6-phospho-beta-D-glucosyl-(1-&gt;4)-D-glucose + ADP + H(+). Catalyzes the ATP-dependent phosphorylation of cellobiose to produce cellobiose-6'-P. May have a dual role of kinase and transcriptional regulator of the cellobiose-PTS operon. This is Beta-glucoside kinase (bglK) from Listeria innocua serovar 6a (strain ATCC BAA-680 / CLIP 11262).